We begin with the raw amino-acid sequence, 1322 residues long: Phosphoribosylformylglycinamidine synthase (1322 aa).

Residues 300–311 (GASTGAGGEIRD) and A702 contribute to the ATP site. Residues D703, E742, N746, and D915 each coordinate Mg(2+). S917 contacts ATP. One can recognise a Glutamine amidotransferase type-1 domain in the interval 1073 to 1322 (VAILREQGIN…LFRNARAWVG (250 aa)). C1166 acts as the Nucleophile in catalysis. Residues H1287 and E1289 contribute to the active site.

It in the N-terminal section; belongs to the FGAMS family. Monomer.

It localises to the cytoplasm. The catalysed reaction is N(2)-formyl-N(1)-(5-phospho-beta-D-ribosyl)glycinamide + L-glutamine + ATP + H2O = 2-formamido-N(1)-(5-O-phospho-beta-D-ribosyl)acetamidine + L-glutamate + ADP + phosphate + H(+). Its pathway is purine metabolism; IMP biosynthesis via de novo pathway; 5-amino-1-(5-phospho-D-ribosyl)imidazole from N(2)-formyl-N(1)-(5-phospho-D-ribosyl)glycinamide: step 1/2. Phosphoribosylformylglycinamidine synthase involved in the purines biosynthetic pathway. Catalyzes the ATP-dependent conversion of formylglycinamide ribonucleotide (FGAR) and glutamine to yield formylglycinamidine ribonucleotide (FGAM) and glutamate. The polypeptide is Phosphoribosylformylglycinamidine synthase (Xylella fastidiosa (strain Temecula1 / ATCC 700964)).